Reading from the N-terminus, the 310-residue chain is MALSSRLWRLLPLLRGAEQSVCQLARSWGSGGRCGTWGFRGSEVTGNTRAFKRGLLFSALSYLGFETYQVISQAAVVHATAKVEEILEQADYLYESGETEKLYQLLTQYKESEDVELLWRLARASRDIAQLCKTSEEEKKVLLYEALEYAKRALEKKGSSFAAHKWYAICISDVGDYEGIKVKIANAYVIKEHFEKAIELNPKDATSIHLMGIWCYTFAEMPWYQRRIAEVLFANPPSSTYEEALKYFHRAEEVDPNFYSKNLLLLGKTYLKLNNKKLAAFWLVKAKSYPAHTEEDKQIQTEAAQLLTGL.

Lys165 carries the post-translational modification N6-succinyllysine. 2 TPR repeats span residues 168-204 (AICISDVGDYEGIKVKIANAYVIKEHFEKAIELNPKD) and 222-258 (PWYQRRIAEVLFANPPSSTYEEALKYFHRAEEVDPNF).

This sequence belongs to the RMDN family. As to quaternary structure, interacts with microtubules.

The protein resides in the cytoplasm. The protein localises to the cytoskeleton. It localises to the spindle. It is found in the spindle pole. In Rattus norvegicus (Rat), this protein is Regulator of microtubule dynamics protein 1 (Rmdn1).